Here is a 747-residue protein sequence, read N- to C-terminus: DNA damage checkpoint protein LCD1 (747 aa).

3 positions are modified to phosphoserine: S10, S11, and S76. A coiled-coil region spans residues 62–139 (NQLVNQLNKA…MEARGKSKRE (78 aa)). Residues 145–180 (KPPSTTLSTNTNTITPDSSSVAIEAKPQSPQSKKRK) are disordered. Positions 146 to 160 (PPSTTLSTNTNTITP) are enriched in low complexity.

Forms a complex with MEC1. Phosphorylated by MEC1 in a cell cycle dependent manner and in response to DNA damage.

The protein localises to the cytoplasm. The protein resides in the nucleus. In terms of biological role, forms a complex with the serine/threonine kinase MEC1 which activates checkpoint signaling upon genotoxic stresses. The MEC1-LCD1 complex is recruited by the single-strand-binding protein complex RPA to DNA lesions in order to initiate the DNA repair by homologous recombination, after the MRX-complex and TEL1 are displaced. Required for the recruitment of MEC1 to DNA lesions, the activation of CHK1 and RAD53 kinases and phosphorylation of RAD9 in response to DNA damage. Required for cell growth and meiotic recombination. This chain is DNA damage checkpoint protein LCD1 (LCD1), found in Saccharomyces cerevisiae (strain ATCC 204508 / S288c) (Baker's yeast).